A 247-amino-acid chain; its full sequence is Sugar fermentation stimulation protein homolog (247 aa).

Belongs to the SfsA family.

This chain is Sugar fermentation stimulation protein homolog, found in Aeromonas hydrophila subsp. hydrophila (strain ATCC 7966 / DSM 30187 / BCRC 13018 / CCUG 14551 / JCM 1027 / KCTC 2358 / NCIMB 9240 / NCTC 8049).